We begin with the raw amino-acid sequence, 157 residues long: S-ribosylhomocysteine lyase (157 aa).

Positions 53, 57, and 124 each coordinate Fe cation.

Belongs to the LuxS family. As to quaternary structure, homodimer. Requires Fe cation as cofactor.

It carries out the reaction S-(5-deoxy-D-ribos-5-yl)-L-homocysteine = (S)-4,5-dihydroxypentane-2,3-dione + L-homocysteine. In terms of biological role, involved in the synthesis of autoinducer 2 (AI-2) which is secreted by bacteria and is used to communicate both the cell density and the metabolic potential of the environment. The regulation of gene expression in response to changes in cell density is called quorum sensing. Catalyzes the transformation of S-ribosylhomocysteine (RHC) to homocysteine (HC) and 4,5-dihydroxy-2,3-pentadione (DPD). The sequence is that of S-ribosylhomocysteine lyase from Borrelia garinii subsp. bavariensis (strain ATCC BAA-2496 / DSM 23469 / PBi) (Borreliella bavariensis).